A 119-amino-acid chain; its full sequence is UPF0292 protein TV1259 (119 aa).

One can recognise a Toprim domain in the interval 11-93; sequence SIPIIVEGRN…YVDLYLWNFI (83 aa). Residues glutamate 17, aspartate 62, and aspartate 64 each contribute to the Mg(2+) site.

The protein belongs to the UPF0292 family. Mg(2+) is required as a cofactor.

This is UPF0292 protein TV1259 from Thermoplasma volcanium (strain ATCC 51530 / DSM 4299 / JCM 9571 / NBRC 15438 / GSS1).